A 162-amino-acid chain; its full sequence is uncharacterized protein (162 aa).

Residues 1–24 form the signal peptide; sequence MCKRFKFLLAVSALFISITVVLAG. Cys25 is lipidated: N-palmitoyl cysteine. The S-diacylglycerol cysteine moiety is linked to residue Cys25.

Its subcellular location is the cell membrane. This is an uncharacterized protein from Bacillus anthracis.